A 197-amino-acid chain; its full sequence is Dephospho-CoA kinase (197 aa).

The DPCK domain occupies I2–R197. A10–T15 is a binding site for ATP.

The protein belongs to the CoaE family.

The protein resides in the cytoplasm. The enzyme catalyses 3'-dephospho-CoA + ATP = ADP + CoA + H(+). The protein operates within cofactor biosynthesis; coenzyme A biosynthesis; CoA from (R)-pantothenate: step 5/5. In terms of biological role, catalyzes the phosphorylation of the 3'-hydroxyl group of dephosphocoenzyme A to form coenzyme A. The chain is Dephospho-CoA kinase from Streptococcus pyogenes serotype M28 (strain MGAS6180).